Reading from the N-terminus, the 988-residue chain is DExH-box ATP-dependent RNA helicase DExH9 (988 aa).

A disordered region spans residues 1-27 (MGSVKRKSVEESSDSAPPQKVQREDDS). The Helicase ATP-binding domain maps to 76-232 (IKCLDNGESV…WVAKVHQQPC (157 aa)). 89 to 96 (AHTSAGKT) contributes to the ATP binding site. The DEVH box motif lies at 180–183 (DEVH). The region spanning 307–509 (DIFKLVKMII…SYNMLLNQLR (203 aa)) is the Helicase C-terminal domain.

Belongs to the DExH box helicase family. SKI2 subfamily. As to expression, ubiquitous but preferentially expressed in active tissues.

Its subcellular location is the nucleus. The protein resides in the nucleolus. The catalysed reaction is ATP + H2O = ADP + phosphate + H(+). ATP-dependent RNA helicase that associates with the RNA exosome complex. Required for proper rRNA biogenesis and development. Involved in the 3'-processing of the 7S pre-RNA to the mature 5.8S rRNA and also in the removal of rRNA maturation by-products. In Arabidopsis thaliana (Mouse-ear cress), this protein is DExH-box ATP-dependent RNA helicase DExH9.